Reading from the N-terminus, the 193-residue chain is Bradykinin-potentiating and C-type natriuretic peptides (193 aa).

Positions 1 to 23 (MFVSRLAASGLLLLALLALSLDG) are cleaved as a signal peptide. The propeptide occupies 24–27 (KPVH). A disordered region spans residues 25-173 (PVHQSKPGRS…RMKGLAKKAM (149 aa)). Pyrrolidone carboxylic acid is present on Gln-28. 2 propeptides span residues 40-43 (LSAQ) and 58-64 (LSVQQWS). The residue at position 65 (Gln-65) is a Pyrrolidone carboxylic acid. Residues 75–169 (VVVQPHESPA…GGARRMKGLA (95 aa)) constitute a propeptide that is removed on maturation. The segment covering 95 to 123 (SPGPEAASGPAAPHRLPKSKGASATSAAS) has biased composition (low complexity). A compositionally biased stretch (basic and acidic residues) spans 125 to 150 (PMRDLRTDGKQERQKWGRMVQPDHHA). Residues 152–162 (PGGGGGGGGGA) show a composition bias toward gly residues. Residues 163–173 (RRMKGLAKKAM) show a composition bias toward basic residues. A disulfide bridge links Cys-177 with Cys-193.

The protein in the N-terminal section; belongs to the bradykinin-potentiating peptide family. In the C-terminal section; belongs to the natriuretic peptide family. In terms of tissue distribution, expressed by the venom gland.

Its subcellular location is the secreted. In terms of biological role, bradykinin-potentiating peptide both inhibits the activity of the angiotensin-converting enzyme (ACE) and enhances the action of bradykinin by inhibiting the peptidases that inactivate it. It acts as an indirect hypotensive agent. Neither synthetic Tf1, nor synthetic Tf2 show bradykinin-potentiating effects. Has a vasorelaxant activity in rat aortic strips and a diuretic potency in anesthetized rats. Its function is as follows. Has a vasorelaxant activity in rat aortic strips and a diuretic potency in anesthetized rats. Is as potent as Tf-CNP. In Protobothrops flavoviridis (Habu), this protein is Bradykinin-potentiating and C-type natriuretic peptides.